The following is a 155-amino-acid chain: Ribosomal RNA large subunit methyltransferase H (155 aa).

S-adenosyl-L-methionine contacts are provided by residues leucine 72, glycine 103, and 122 to 127 (LSALTL).

It belongs to the RNA methyltransferase RlmH family. Homodimer.

It localises to the cytoplasm. The enzyme catalyses pseudouridine(1915) in 23S rRNA + S-adenosyl-L-methionine = N(3)-methylpseudouridine(1915) in 23S rRNA + S-adenosyl-L-homocysteine + H(+). Its function is as follows. Specifically methylates the pseudouridine at position 1915 (m3Psi1915) in 23S rRNA. The sequence is that of Ribosomal RNA large subunit methyltransferase H from Citrobacter koseri (strain ATCC BAA-895 / CDC 4225-83 / SGSC4696).